A 2717-amino-acid chain; its full sequence is Naringenin synthase (2717 aa).

An adenylation (A) domain region spans residues 13-422 (HHAVESRDKV…VGRKKELIIR (410 aa)). One can recognise a Carrier 1 domain in the interval 531-617 (AAVEALVLAE…AVRDYLFNRL (87 aa)). Ser576 bears the O-(pantetheine 4'-phosphoryl)serine mark. Residues 638–1066 (AEPIAIISMA…GTNAHIILEQ (429 aa)) enclose the Ketosynthase family 3 (KS3) domain. Catalysis depends on for beta-ketoacyl synthase activity residues Cys810, His945, and His988. The region spanning 1204–1462 (PIFSRAFKEA…GPSAVLSPHV (259 aa)) is the Malonyl-CoA:ACP transacylase (MAT) domain. Residues 1549–1688 (HGVLYRTTSI…GTLKLISLPP (140 aa)) form an N-terminal hotdog fold region. One can recognise a PKS/mFAS DH domain in the interval 1549–1847 (HGVLYRTTSI…LRAVQPPVVE (299 aa)). Residues 1561-1842 (TNDIICAGFV…ISEVMLRAVQ (282 aa)) are dehydratase (DH) domain. The active-site Proton acceptor; for dehydratase activity is His1581. The tract at residues 1703-1847 (NSEVDVSKAY…LRAVQPPVVE (145 aa)) is C-terminal hotdog fold. Asp1764 serves as the catalytic Proton donor; for dehydratase activity. The Ketoreductase (KR) domain occupies 2008-2186 (GTVLITGGTG…AVSLAWGPWA (179 aa)). In terms of domain architecture, Carrier 2 spans 2277-2354 (SRSDTLLGLV…ALVQYLLDRI (78 aa)). Ser2313 carries the O-(pantetheine 4'-phosphoryl)serine modification. Residues 2361–2373 (EIELDQDVAEEET) are compositionally biased toward acidic residues. The segment at 2361 to 2412 (EIELDQDVAEEETVSGTNGHQNGHQNGTQNGHSNGHANGASTNGDATDGIDP) is disordered. Low complexity predominate over residues 2375–2396 (SGTNGHQNGHQNGTQNGHSNGH). Residues 2497–2711 (SLSVYSAVAA…AIAVEIEHWA (215 aa)) form a thioester reductase (TE) domain region.

In the N-terminal section; belongs to the NRP synthetase family. It depends on pantetheine 4'-phosphate as a cofactor.

Functionally, PKS-NRPS hybrid synthetase that, alone, is sufficient to produce naringenin chalcone, the direct precursor of naringenin, by using p-coumaric acid (p-CA) or p-hydroxybenzoic acid (p-HBA) with the involvement of malonyl-CoA molecules. The adenylation (A) domain activates p-CA or p-HBA as adenylates, which are transferred to the thiol group of the pantetheinyl residue of the T domain, and further transferred to the adjacent PKS portion of fnsA. Besides p-CA and p-HBA, the A domain is also able to activate other substrates such as cinnamic acid and salicyclic acid. Within the PKS portion of fnsA, p-CA and p-HBA act as starter units for respectively three or four malonyl-CoA molecules for elongation by the AT and KS domains of fnsA. Afterwards, naringenin chalcone is cyclized through Claisen condensation and thereby released either spontaneously or catalyzed by the TE domain. Finally, naringenin chalcone is converted to naringenin spontaneously or by a chalcone isomerase. The sequence is that of Naringenin synthase from Pestalotiopsis fici (strain W106-1 / CGMCC3.15140).